The chain runs to 426 residues: Histidine--tRNA ligase (426 aa).

The protein belongs to the class-II aminoacyl-tRNA synthetase family. In terms of assembly, homodimer.

It is found in the cytoplasm. The enzyme catalyses tRNA(His) + L-histidine + ATP = L-histidyl-tRNA(His) + AMP + diphosphate + H(+). This Prochlorococcus marinus (strain MIT 9312) protein is Histidine--tRNA ligase.